A 282-amino-acid chain; its full sequence is Probable transcription factor At1g66420 (282 aa).

The segment at serine 33–glutamate 73 is disordered.

The protein belongs to the GeBP family.

The polypeptide is Probable transcription factor At1g66420 (Arabidopsis thaliana (Mouse-ear cress)).